The chain runs to 339 residues: RNA 3'-terminal phosphate cyclase (339 aa).

Residues Asp109 and 286-290 each bind ATP; that span reads HLADQ. His310 (tele-AMP-histidine intermediate) is an active-site residue.

This sequence belongs to the RNA 3'-terminal cyclase family. Type 1 subfamily.

It localises to the cytoplasm. The catalysed reaction is a 3'-end 3'-phospho-ribonucleotide-RNA + ATP = a 3'-end 2',3'-cyclophospho-ribonucleotide-RNA + AMP + diphosphate. In terms of biological role, catalyzes the conversion of 3'-phosphate to a 2',3'-cyclic phosphodiester at the end of RNA. The mechanism of action of the enzyme occurs in 3 steps: (A) adenylation of the enzyme by ATP; (B) transfer of adenylate to an RNA-N3'P to produce RNA-N3'PP5'A; (C) and attack of the adjacent 2'-hydroxyl on the 3'-phosphorus in the diester linkage to produce the cyclic end product. The biological role of this enzyme is unknown but it is likely to function in some aspects of cellular RNA processing. This is RNA 3'-terminal phosphate cyclase from Halobacterium salinarum (strain ATCC 29341 / DSM 671 / R1).